Here is a 273-residue protein sequence, read N- to C-terminus: MENRTNFFHLHLISDSTGETLISAGRAASAQFRSAQPIEHVYPLIRNRKQLLPVLQAIDDAPGIVLYTIVDRELANLIDERCVEMGVASVNVLEPVMNAFQIYLGAPSRRRVGAQHVMNAGYFARIEALNFTMDHDDGQMPDDYNDADVVIIGISRTSKTPTSIYLANRGIKTANIPIVYGVPLPESLLAATKPLIVCLIATTDRISQVRENRVLGTTQGFDREHYTDRATISEELKYARSLCARHGWPLIDVTRRSIEETAAAIVALRPKLR.

Residue 153–160 (GISRTSKT) coordinates ADP.

It belongs to the pyruvate, phosphate/water dikinase regulatory protein family. PDRP subfamily.

It carries out the reaction N(tele)-phospho-L-histidyl/L-threonyl-[pyruvate, phosphate dikinase] + ADP = N(tele)-phospho-L-histidyl/O-phospho-L-threonyl-[pyruvate, phosphate dikinase] + AMP + H(+). The enzyme catalyses N(tele)-phospho-L-histidyl/O-phospho-L-threonyl-[pyruvate, phosphate dikinase] + phosphate + H(+) = N(tele)-phospho-L-histidyl/L-threonyl-[pyruvate, phosphate dikinase] + diphosphate. Bifunctional serine/threonine kinase and phosphorylase involved in the regulation of the pyruvate, phosphate dikinase (PPDK) by catalyzing its phosphorylation/dephosphorylation. The chain is Putative pyruvate, phosphate dikinase regulatory protein from Rhizobium etli (strain ATCC 51251 / DSM 11541 / JCM 21823 / NBRC 15573 / CFN 42).